We begin with the raw amino-acid sequence, 109 residues long: YTPDDWYRLIQDKYQQIRKTQADSTQNLGERVNDIAFWKECLFHREKAIAQLASDRTRRPNIELCRLVNEVYEVDETIQTLQQRLRDSEDTLQSLAHTKANTLYIDQEK.

Belongs to the tektin family. In terms of assembly, microtubule inner protein component of sperm flagellar doublet microtubules. Interacts with TEKT1, TEKT2, TEKT4 and TEKT5. Interacts with CCDC38. N- and O-glycosylated. In terms of processing, may be proteolytically processed during the epididymal transit of spermatozoa. Post-translationally, ubiquitinated, leading to its degradation. Deubiquitinated by USP16, promoting its stability.

It is found in the cytoplasm. The protein localises to the cytoskeleton. Its subcellular location is the cilium axoneme. The protein resides in the flagellum axoneme. It localises to the cytoplasmic vesicle. It is found in the secretory vesicle. The protein localises to the acrosome outer membrane. Its function is as follows. Microtubule inner protein (MIP) part of the dynein-decorated doublet microtubules (DMTs) in cilia and flagellar axoneme. Forms filamentous polymers in the walls of ciliary and flagellar microtubules. Required for normal sperm mobility. The sequence is that of Tektin-3 from Mesocricetus auratus (Golden hamster).